The following is a 452-amino-acid chain: Glutamyl-tRNA(Gln) amidotransferase subunit A (452 aa).

Residues Lys-56 and Ser-131 each act as charge relay system in the active site. Residue Ser-155 is the Acyl-ester intermediate of the active site.

Belongs to the amidase family. GatA subfamily. Heterotrimer of A, B and C subunits.

It catalyses the reaction L-glutamyl-tRNA(Gln) + L-glutamine + ATP + H2O = L-glutaminyl-tRNA(Gln) + L-glutamate + ADP + phosphate + H(+). Functionally, allows the formation of correctly charged Gln-tRNA(Gln) through the transamidation of misacylated Glu-tRNA(Gln) in organisms which lack glutaminyl-tRNA synthetase. The reaction takes place in the presence of glutamine and ATP through an activated gamma-phospho-Glu-tRNA(Gln). In Campylobacter concisus (strain 13826), this protein is Glutamyl-tRNA(Gln) amidotransferase subunit A.